A 739-amino-acid chain; its full sequence is NAD(P)H-quinone oxidoreductase subunit 5, chloroplastic (739 aa).

16 helical membrane-spanning segments follow: residues 9-29 (WIIP…LLLV), 39-59 (IWAF…ADLA), 89-109 (IDPL…MVLI), 125-145 (FAYM…SNLI), 147-167 (IYIF…FWFT), 185-205 (GDFG…SFEF), 224-244 (LFAA…SAQF), 258-278 (TPIS…FLVA), 280-300 (LLPL…IGII), 327-347 (LGYI…FHLI), 354-374 (ALLF…VGYS), 396-416 (TTFF…CFWS), 425-445 (WLYS…TAFY), 544-564 (LFPM…GIPF), 603-623 (IYSV…YGSV), and 719-739 (YIFL…FFSF).

It belongs to the complex I subunit 5 family. NDH is composed of at least 16 different subunits, 5 of which are encoded in the nucleus.

It localises to the plastid. The protein resides in the chloroplast thylakoid membrane. The enzyme catalyses a plastoquinone + NADH + (n+1) H(+)(in) = a plastoquinol + NAD(+) + n H(+)(out). It catalyses the reaction a plastoquinone + NADPH + (n+1) H(+)(in) = a plastoquinol + NADP(+) + n H(+)(out). Functionally, NDH shuttles electrons from NAD(P)H:plastoquinone, via FMN and iron-sulfur (Fe-S) centers, to quinones in the photosynthetic chain and possibly in a chloroplast respiratory chain. The immediate electron acceptor for the enzyme in this species is believed to be plastoquinone. Couples the redox reaction to proton translocation, and thus conserves the redox energy in a proton gradient. The polypeptide is NAD(P)H-quinone oxidoreductase subunit 5, chloroplastic (ndhF) (Acorus calamus var. americanus (American sweet flag)).